The following is a 120-amino-acid chain: MVNLNPKRSDEPVWWGLFGAGGTWFAMLTPVTILVLGILVPLGVIGPESMNYLRVAGFVTSIIGALFVIGSISMPMWHAMHRVHHGMHDLKFHTGTAGKIACYATAALATVLSIVFIFMI.

The next 3 helical transmembrane spans lie at 25 to 45, 55 to 75, and 100 to 120; these read FAML…LGVI, VAGF…ISMP, and IACY…IFMI.

The protein belongs to the FrdD family. Part of an enzyme complex containing four subunits: a flavoprotein (FrdA), an iron-sulfur protein (FrdB), and two hydrophobic anchor proteins (FrdC and FrdD).

The protein localises to the cell inner membrane. Functionally, anchors the catalytic components of the fumarate reductase complex to the cell membrane, binds quinones. This chain is Fumarate reductase subunit D, found in Aliivibrio salmonicida (strain LFI1238) (Vibrio salmonicida (strain LFI1238)).